Consider the following 444-residue polypeptide: tRNA-2-methylthio-N(6)-dimethylallyladenosine synthase (444 aa).

In terms of domain architecture, MTTase N-terminal spans P4–A120. The [4Fe-4S] cluster site is built by C13, C49, C83, C155, C159, and C162. In terms of domain architecture, Radical SAM core spans R141–R372. Positions A374 to T438 constitute a TRAM domain.

This sequence belongs to the methylthiotransferase family. MiaB subfamily. Monomer. It depends on [4Fe-4S] cluster as a cofactor.

It localises to the cytoplasm. The enzyme catalyses N(6)-dimethylallyladenosine(37) in tRNA + (sulfur carrier)-SH + AH2 + 2 S-adenosyl-L-methionine = 2-methylsulfanyl-N(6)-dimethylallyladenosine(37) in tRNA + (sulfur carrier)-H + 5'-deoxyadenosine + L-methionine + A + S-adenosyl-L-homocysteine + 2 H(+). Its function is as follows. Catalyzes the methylthiolation of N6-(dimethylallyl)adenosine (i(6)A), leading to the formation of 2-methylthio-N6-(dimethylallyl)adenosine (ms(2)i(6)A) at position 37 in tRNAs that read codons beginning with uridine. The polypeptide is tRNA-2-methylthio-N(6)-dimethylallyladenosine synthase (Synechococcus sp. (strain JA-2-3B'a(2-13)) (Cyanobacteria bacterium Yellowstone B-Prime)).